Consider the following 161-residue polypeptide: UPF0178 protein PXO_00400 (161 aa).

The protein belongs to the UPF0178 family.

The polypeptide is UPF0178 protein PXO_00400 (Xanthomonas oryzae pv. oryzae (strain PXO99A)).